Here is a 274-residue protein sequence, read N- to C-terminus: MAIVKCKPTSPGRRFVVKVVNQELHKGAPHAPLLEKKSKSGGRNNNGRITTRHVGGGHKQHYRLVDFRRNDKDGIPATVERIEYDPNRTAHIALLCYADGERRYIIAPKGVSAGDQLIAGALAPIKAGNSLQLRNIPVGSTIHGIELKPGKGAQIARSAGASAQLIAREGVYVTLRLRSGEMRKVLAECRATLGEVSNSEHSLRSLGKAGAKRWRGVRPTVRGVAMNPVDHPHGGGEGRTSGGRHPVSPWGFPTKGAKTRGNKRTDNMIVRRRK.

Disordered regions lie at residues 28 to 55 (APHAPLLEKKSKSGGRNNNGRITTRHVG) and 224 to 274 (VAMN…RRRK).

It belongs to the universal ribosomal protein uL2 family. In terms of assembly, part of the 50S ribosomal subunit. Forms a bridge to the 30S subunit in the 70S ribosome.

Functionally, one of the primary rRNA binding proteins. Required for association of the 30S and 50S subunits to form the 70S ribosome, for tRNA binding and peptide bond formation. It has been suggested to have peptidyltransferase activity; this is somewhat controversial. Makes several contacts with the 16S rRNA in the 70S ribosome. The chain is Large ribosomal subunit protein uL2 from Pseudomonas putida (strain W619).